Consider the following 564-residue polypeptide: MFS-type efflux pump LUC4 (564 aa).

The segment covering 1–15 (MGQSQDNTQLTTASP) has biased composition (polar residues). Residues 1 to 35 (MGQSQDNTQLTTASPQAEKDLSSNDNPPESEPAAP) are disordered. Helical transmembrane passes span 42–62 (WLVFIAIALTTFLAALDTSII), 78–98 (LYVWIVDSYLLASTATIPIFA), 108–128 (SLTLIAVCLFTLGSGLCGGAH), 141–161 (GVGGGGILTMSEIVVCDMVSV), and 170–190 (IIGGVWAIASVIAPIMGGAFA). Asn-192 carries N-linked (GlcNAc...) asparagine glycosylation. The next 3 membrane-spanning stretches (helical) occupy residues 197–217 (WIFYINLPIAGVVLVALIVFL), 236–256 (WGGSVLLIASVTAVVLALSWG), and 268–288 (LVPLILGLVGQLAFFAYQGAP). A glycan (N-linked (GlcNAc...) asparagine) is linked at Asn-302. A run of 5 helical transmembrane segments spans residues 308–328 (LFVISFVHSMLLFWVCYFLPV), 343–363 (VMLFPIATTSAPGGVIAGIFI), 371–391 (VWHFVGFALMSISCGLFTLLD), 404–424 (LLFGFGTGFVFTSCLPPILAS), and 436–456 (AWTFLRNFGSIWGIAIPAAAF). Residue Asn-461 is glycosylated (N-linked (GlcNAc...) asparagine). A helical transmembrane segment spans residues 512 to 532 (KLVWQVSIAFSVLGFVLAFLV).

This sequence belongs to the major facilitator superfamily. TCR/Tet family.

It localises to the membrane. In terms of biological role, MFS-type efflux pump; part of the gene cluster that mediates the biosynthesis of the mycotoxin lucilactaene and the lucilactaene-related compound NG-391 that act as cell cycle inhibitors with potent growth inhibitory activity against malarial parasites, moderate growth inhibitory activity against cancer cells, and no activity against bacteria and fungi. The protein is MFS-type efflux pump LUC4 of Fusarium sp.